The chain runs to 374 residues: WW domain-binding protein 4 (374 aa).

A Matrin-type zinc finger spans residues 11–42; that stretch reads KFCDYCKCWIADNRPSVEFHERGKNHKENVAR. Residues 91 to 109 are compositionally biased toward polar residues; it reads EPTISPVTNTVQPTPTANQ. Disordered regions lie at residues 91–126 and 188–328; these read EPTI…SKGR and SKWE…EAGA. Over residues 112–121 the composition is skewed to basic residues; that stretch reads EKKKKKKKKE. 2 WW domains span residues 121 to 154 and 162 to 195; these read EASK…KPEG and TAAK…KPDD. Basic and acidic residues-rich tracts occupy residues 188 to 197 and 205 to 270; these read SKWEKPDDFI and SSKD…EKTT. Phosphoserine is present on residues S219, S226, and S228. Residues 315–325 are compositionally biased toward polar residues; the sequence is STENECLSSSE. Residues 355–373 form an interaction with SNRNP200 region; the sequence is KKRRIENGKSRNLRQRGED.

In terms of assembly, component of the spliceosome B complex. Associated with U2 snRNPs. Binds splicing factors SNRPB, SNRPC and SF1. Interacts via the WW domains with the Pro-rich domains of KHDRBS1/SAM68. Interacts via the WW domains with the Pro-rich domains of WBP11. Interacts with SNRNP200.

It is found in the nucleus. It localises to the nucleus speckle. Its function is as follows. Involved in pre-mRNA splicing as a component of the spliceosome. May play a role in cross-intron bridging of U1 and U2 snRNPs in the mammalian A complex. The sequence is that of WW domain-binding protein 4 (Wbp4) from Rattus norvegicus (Rat).